Consider the following 470-residue polypeptide: Aminodeoxychorismate synthase component 1 (470 aa).

The protein belongs to the anthranilate synthase component I family. Monomer. Heterodimer consisting of two non-identical subunits: a glutamine amidotransferase subunit (PabA) and a aminodeoxychorismate synthase subunit (PabB). The cofactor is Mg(2+).

It catalyses the reaction chorismate + L-glutamine = 4-amino-4-deoxychorismate + L-glutamate. It participates in cofactor biosynthesis; tetrahydrofolate biosynthesis; 4-aminobenzoate from chorismate: step 1/2. In terms of biological role, part of a heterodimeric complex that catalyzes the two-step biosynthesis of 4-amino-4-deoxychorismate (ADC), a precursor of p-aminobenzoate (PABA) and tetrahydrofolate. In the first step, a glutamine amidotransferase (PabA) generates ammonia as a substrate that, along with chorismate, is used in the second step, catalyzed by aminodeoxychorismate synthase (PabB) to produce ADC. The sequence is that of Aminodeoxychorismate synthase component 1 (pabB) from Lactococcus lactis subsp. lactis (Streptococcus lactis).